We begin with the raw amino-acid sequence, 87 residues long: Toxin Cll4 (87 aa).

The first 19 residues, 1-19 (MNSLLMITACLALIGTVWA), serve as a signal peptide directing secretion. Residues 20-85 (KEGYIVNYHD…VWPLPKKRCN (66 aa)) enclose the LCN-type CS-alpha/beta domain. Disulfide bonds link C31–C84, C35–C60, C44–C65, and C48–C67. N85 carries the asparagine amide modification.

The protein belongs to the long (4 C-C) scorpion toxin superfamily. Sodium channel inhibitor family. Beta subfamily. As to expression, expressed by the venom gland.

The protein localises to the secreted. Functionally, beta toxins bind voltage-independently at site-4 of sodium channels (Nav) and shift the voltage of activation toward more negative potentials thereby affecting sodium channel activation and promoting spontaneous and repetitive firing. The sequence is that of Toxin Cll4 from Centruroides limpidus (Mexican scorpion).